The chain runs to 145 residues: CASP-like protein SELMODRAFT_406854 (145 aa).

Over 1–31 (MGVASQSSVANEAGAAPEASIQQTLRGFSSP) the chain is Cytoplasmic. The chain crosses the membrane as a helical span at residues 32–52 (TSLLLRIATAVLCTLTLAFLV). Over 53–75 (TSKERKEIASIDIVAIWSNSKAL) the chain is Extracellular. The chain crosses the membrane as a helical span at residues 76–96 (IFLAVVSGICLGYSLLHAAVF). Residues 97–112 (LVMLSGNRKPLARKKA) lie on the Cytoplasmic side of the membrane. Residues 113 to 133 (LDWMVFLADQVFFKIFCWFSI) traverse the membrane as a helical segment. Residues 134–145 (RVSSRRSKAGFV) are Extracellular-facing.

This sequence belongs to the Casparian strip membrane proteins (CASP) family. In terms of assembly, homodimer and heterodimers.

The protein resides in the cell membrane. This is CASP-like protein SELMODRAFT_406854 from Selaginella moellendorffii (Spikemoss).